We begin with the raw amino-acid sequence, 393 residues long: NAD(P)H-quinone oxidoreductase subunit H, chloroplastic (393 aa).

This sequence belongs to the complex I 49 kDa subunit family. As to quaternary structure, NDH is composed of at least 16 different subunits, 5 of which are encoded in the nucleus.

The protein resides in the plastid. The protein localises to the chloroplast thylakoid membrane. It catalyses the reaction a plastoquinone + NADH + (n+1) H(+)(in) = a plastoquinol + NAD(+) + n H(+)(out). The enzyme catalyses a plastoquinone + NADPH + (n+1) H(+)(in) = a plastoquinol + NADP(+) + n H(+)(out). In terms of biological role, NDH shuttles electrons from NAD(P)H:plastoquinone, via FMN and iron-sulfur (Fe-S) centers, to quinones in the photosynthetic chain and possibly in a chloroplast respiratory chain. The immediate electron acceptor for the enzyme in this species is believed to be plastoquinone. Couples the redox reaction to proton translocation, and thus conserves the redox energy in a proton gradient. In Nuphar advena (Common spatterdock), this protein is NAD(P)H-quinone oxidoreductase subunit H, chloroplastic.